A 315-amino-acid chain; its full sequence is UDP-N-acetylenolpyruvoylglucosamine reductase (315 aa).

Residues 27–207 form the FAD-binding PCMH-type domain; the sequence is RVGGPADVLY…TKRMNAITAR (181 aa). Arg172 is a catalytic residue. Residues 214-236 form a disordered region; that stretch reads IREKTSGSTFANPDPPGTPNQRK. Ser221 acts as the Proton donor in catalysis. Residue Glu297 is part of the active site.

Belongs to the MurB family. Requires FAD as cofactor.

It localises to the cytoplasm. The catalysed reaction is UDP-N-acetyl-alpha-D-muramate + NADP(+) = UDP-N-acetyl-3-O-(1-carboxyvinyl)-alpha-D-glucosamine + NADPH + H(+). Its pathway is cell wall biogenesis; peptidoglycan biosynthesis. In terms of biological role, cell wall formation. This Maricaulis maris (strain MCS10) (Caulobacter maris) protein is UDP-N-acetylenolpyruvoylglucosamine reductase.